The chain runs to 704 residues: Tryptophan synthase (704 aa).

The tract at residues 1–292 (MEAIKKVFEQ…QLTPNAETAK (292 aa)) is tryptophan synthase alpha chain. Residues E49 and D60 each act as proton acceptor in the active site. The tract at residues 293–704 (GVENILPARF…HVSSNAIPSK (412 aa)) is tryptophan synthase beta chain. K380 is subject to N6-(pyridoxal phosphate)lysine.

It in the N-terminal section; belongs to the TrpA family. This sequence in the C-terminal section; belongs to the TrpB family. Requires pyridoxal 5'-phosphate as cofactor.

The catalysed reaction is (1S,2R)-1-C-(indol-3-yl)glycerol 3-phosphate + L-serine = D-glyceraldehyde 3-phosphate + L-tryptophan + H2O. It functions in the pathway amino-acid biosynthesis; L-tryptophan biosynthesis; L-tryptophan from chorismate: step 5/5. This chain is Tryptophan synthase (TRP-1), found in Coprinopsis cinerea (strain Okayama-7 / 130 / ATCC MYA-4618 / FGSC 9003) (Inky cap fungus).